Reading from the N-terminus, the 1018-residue chain is Calcium-transporting ATPase sarcoplasmic/endoplasmic reticulum type (1018 aa).

Topologically, residues 1 to 48 are cytoplasmic; sequence MEDGHSKTVDEVLSHFRVDPERGLSLDQVKEYQKKYGPNELPAEEGKT. Residues 49-69 traverse the membrane as a helical segment; the sequence is LWQLVLEQFDDLLVKILLLAA. Residues 70 to 88 lie on the Lumenal side of the membrane; sequence IISFVLALFEEHEGVEAFV. A helical transmembrane segment spans residues 89–109; that stretch reads EPFVILLILIANAVVGVWQER. Over 110–252 the chain is Cytoplasmic; that stretch reads NAESAIEALK…EIKTPLQQKL (143 aa). A helical membrane pass occupies residues 253 to 272; sequence DEFGEQLSKVISLICVAVWA. The Lumenal segment spans residues 273–294; that stretch reads INIGHFNDPAHGGSWIKGAVYY. Residues 295-312 traverse the membrane as a helical segment; the sequence is FKIAVALAVAAIPEGLPA. 4 residues coordinate Ca(2+): valine 303, alanine 304, isoleucine 306, and glutamate 308. Residues 313–756 lie on the Cytoplasmic side of the membrane; it reads VITTCLALGT…EEGRAIYNNM (444 aa). Aspartate 350 functions as the 4-aspartylphosphate intermediate in the catalytic mechanism. Mg(2+)-binding residues include aspartate 702 and aspartate 706. A helical membrane pass occupies residues 757–776; sequence KQFIRYLISSNIGEVVSIFL. Asparagine 767 and glutamate 770 together coordinate Ca(2+). At 777–786 the chain is on the lumenal side; sequence TAALGLPEAL. A helical transmembrane segment spans residues 787 to 807; that stretch reads IPVQLLWVNLVTDGLPATALG. Ca(2+) contacts are provided by asparagine 795, threonine 798, and aspartate 799. Residues 808 to 827 lie on the Cytoplasmic side of the membrane; the sequence is FNPPDLDIMTKPPRKADEGL. A helical membrane pass occupies residues 828–850; it reads ISGWLFFRYMAIGGYVGCATVGG. Residues 851–896 lie on the Lumenal side of the membrane; sequence AAWWFMFSETGPQLSYWQLTHHLSCLGGGEEFKGIDCKIFNDPHPM. A helical membrane pass occupies residues 897–916; that stretch reads TMALSVLVTIEMLNAMNSLS. Residue glutamate 907 coordinates Ca(2+). The Cytoplasmic segment spans residues 917-929; sequence ENQSLVQMPPWCN. A helical membrane pass occupies residues 930–948; that stretch reads IWLIASMCLSFALHFVILY. Residues 949 to 963 are Lumenal-facing; that stretch reads VDVLSTVFQVTPLDG. A helical membrane pass occupies residues 964-984; it reads NEWMTVMKFSLPVVLLDEILK. Residues 985 to 1018 lie on the Cytoplasmic side of the membrane; that stretch reads FVARRISDGESYIKNMHGLVLAWAVFFAYIIWGP.

Belongs to the cation transport ATPase (P-type) (TC 3.A.3) family.

The protein resides in the endoplasmic reticulum membrane. Its subcellular location is the sarcoplasmic reticulum membrane. It catalyses the reaction Ca(2+)(in) + ATP + H2O = Ca(2+)(out) + ADP + phosphate + H(+). In terms of biological role, this magnesium-dependent enzyme catalyzes the hydrolysis of ATP coupled with the transport of calcium. In Anopheles gambiae (African malaria mosquito), this protein is Calcium-transporting ATPase sarcoplasmic/endoplasmic reticulum type.